The chain runs to 309 residues: Taste receptor type 2 member 105 (309 aa).

Over 1 to 9 (MLSAAEGIL) the chain is Extracellular. The chain crosses the membrane as a helical span at residues 10-32 (LSIATVEAGLGVLGNTFIALVNC). Over 33–44 (MDWAKNKKLSKI) the chain is Cytoplasmic. A helical transmembrane segment spans residues 45 to 67 (GFLLFGLATSRIFIVWILILDAY). Residues 68–86 (AKLFFPGKYLSKSLTEIIS) are Extracellular-facing. The chain crosses the membrane as a helical span at residues 87 to 109 (CIWMTVNHMTVWFATSLSIFYFL). The Cytoplasmic segment spans residues 110-129 (KIANFSHYIFLWLKRRTDKV). A helical transmembrane segment spans residues 130–149 (FAFLLWCLLISWAISFSFTV). Residues 150–177 (KVMKSNPKNHGNRTSGTHWEKREFTSNY) lie on the Extracellular side of the membrane. N-linked (GlcNAc...) asparagine glycosylation occurs at Asn161. The chain crosses the membrane as a helical span at residues 178 to 200 (VLINIGVISLLIMTLTACFLLII). Residues 201–226 (SLWKHSRQMQSNVSGFRDLNTEAHVK) are Cytoplasmic-facing. Residues 227-249 (AIKFLISFIILFILYFIGVAVEI) traverse the membrane as a helical segment. Residues 250-258 (ICMFIPENK) are Extracellular-facing. A helical membrane pass occupies residues 259 to 281 (LLFIFGLTTASVYPCCHSVILIL). At 282-309 (TNSQLKQAFVKVLEGLKFSENGKDLRAT) the chain is on the cytoplasmic side.

The protein belongs to the G-protein coupled receptor T2R family. Expressed in subsets of taste receptor cells of the tongue and palate epithelium and exclusively in gustducin-positive cells. Expressed in 15% taste bud cells in circumvallate and foliate papillae but only in 2% in fungiform papillae. Expressed in the duodenum, antrum and fundus (part of the stomach).

The protein localises to the membrane. In terms of biological role, gustducin-coupled cycloheximide receptor implicated in the perception of bitter compounds in the oral cavity and the gastrointestinal tract. Signals through PLCB2 and the calcium-regulated cation channel TRPM5. The protein is Taste receptor type 2 member 105 (Tas2r105) of Rattus norvegicus (Rat).